The sequence spans 140 residues: MSKRGRGGASGAKFRISLGLPVGAVMNCADNTGAKNLFVIAVSGIKGRLNRLPSAGVGDMFVASVKKGKPELRKKVLQAVVVRQRKQYRRIDGSSIYFEDNAGVIVNNKGEMKGSAITGPVTKECADLWPRIASNAGSIA.

It belongs to the universal ribosomal protein uL14 family.

The sequence is that of Large ribosomal subunit protein uL14 (RPL23) from Brugia malayi (Filarial nematode worm).